The following is a 293-amino-acid chain: Protease HtpX (293 aa).

2 consecutive transmembrane segments (helical) span residues 4–24 (IALFLLTNLAVMVVFGLVLSL) and 34–54 (GLLIMALLFGFGGSFISLLMS). Residue His139 coordinates Zn(2+). The active site involves Glu140. Residue His143 participates in Zn(2+) binding. A run of 2 helical transmembrane segments spans residues 158–178 (VVNTFVIFISRIIAQIAAGFL) and 193–213 (LIYFAVATVLELVFGILASII). Glu222 provides a ligand contact to Zn(2+).

This sequence belongs to the peptidase M48B family. Requires Zn(2+) as cofactor.

It localises to the cell inner membrane. The sequence is that of Protease HtpX from Salmonella agona (strain SL483).